Reading from the N-terminus, the 81-residue chain is Sulfur carrier protein TusA (81 aa).

Cysteine 19 acts as the Cysteine persulfide intermediate in catalysis.

It belongs to the sulfur carrier protein TusA family. In terms of assembly, interacts with IscS.

The protein resides in the cytoplasm. It participates in tRNA modification. In terms of biological role, sulfur carrier protein involved in sulfur trafficking in the cell. Part of a sulfur-relay system required for 2-thiolation during synthesis of 2-thiouridine of the modified wobble base 5-methylaminomethyl-2-thiouridine (mnm(5)s(2)U) in tRNA. Interacts with IscS and stimulates its cysteine desulfurase activity. Accepts an activated sulfur from IscS, which is then transferred to TusD, and thus determines the direction of sulfur flow from IscS to 2-thiouridine formation. Also appears to be involved in sulfur transfer for the biosynthesis of molybdopterin. This is Sulfur carrier protein TusA from Escherichia fergusonii (strain ATCC 35469 / DSM 13698 / CCUG 18766 / IAM 14443 / JCM 21226 / LMG 7866 / NBRC 102419 / NCTC 12128 / CDC 0568-73).